The following is a 490-amino-acid chain: MSQSVSERTRIKSDRYESGVIPYAKMGYWDAAYSVKDTDILALFRITPQPGVDPVEAAAAVAGESSTATWTVVWTDLLTACERYRAKAYRVDPVPNATDVYFAFIAYECDLFEEASLSNLTASIIGNVFGFKAISALRLEDMRIPHSYLKTFQGPATGIIVERERLNKYGTPLLGATVKPKLGLSGKNYGRVVYEGLKGGLDFLKDDENINSQPFMRWRERFLNCLEGINRASAATGEVKGSYLNITAATMEEVYKRAEYAKAIGSVVVMIDLVMGYTAIQSIAYWARENDMLLHLHRAGNSTYARQKNHGINFRVICKWMRMSGVDHIHAGTVVGKLEGDPLMIKGFYDILRLTELEVNLPFGIFFEMDWASLRRCMPVASGGIHCGQMHQLIHYLGDDVVLQFGGGTIGHPDGIQAGATANRVALEAMVFSRNEGADYFNNQVGPQILRDAAKTCGPLQTALDLWKDISFNYTSTDTADFAETATANR.

Substrate-binding residues include asparagine 127 and threonine 177. Lysine 179 serves as the catalytic Proton acceptor. Lysine 181 is a binding site for substrate. Mg(2+) is bound by residues lysine 205, aspartate 207, and glutamate 208. At lysine 205 the chain carries N6-carboxylysine. The Proton acceptor role is filled by histidine 297. Substrate is bound by residues arginine 298, histidine 330, and serine 382.

The protein belongs to the RuBisCO large chain family. Type I subfamily. As to quaternary structure, heterohexadecamer of 8 large chains and 8 small chains. It depends on Mg(2+) as a cofactor.

Its subcellular location is the plastid. The protein resides in the chloroplast. It catalyses the reaction 2 (2R)-3-phosphoglycerate + 2 H(+) = D-ribulose 1,5-bisphosphate + CO2 + H2O. It carries out the reaction D-ribulose 1,5-bisphosphate + O2 = 2-phosphoglycolate + (2R)-3-phosphoglycerate + 2 H(+). RuBisCO catalyzes two reactions: the carboxylation of D-ribulose 1,5-bisphosphate, the primary event in carbon dioxide fixation, as well as the oxidative fragmentation of the pentose substrate in the photorespiration process. Both reactions occur simultaneously and in competition at the same active site. The protein is Ribulose bisphosphate carboxylase large chain of Detonula confervacea (Marine diatom).